The following is a 465-amino-acid chain: Ribulose bisphosphate carboxylase large chain (465 aa).

N6,N6,N6-trimethyllysine is present on Lys-4. Asn-113 and Thr-163 together coordinate substrate. Lys-165 acts as the Proton acceptor in catalysis. Position 167 (Lys-167) interacts with substrate. Residues Lys-191, Asp-193, and Glu-194 each coordinate Mg(2+). Position 191 is an N6-carboxylysine (Lys-191). Residue His-284 is the Proton acceptor of the active site. Residues Arg-285, His-317, and Ser-369 each contribute to the substrate site.

Belongs to the RuBisCO large chain family. Type I subfamily. In terms of assembly, heterohexadecamer of 8 large chains and 8 small chains; disulfide-linked. The disulfide link is formed within the large subunit homodimers. It depends on Mg(2+) as a cofactor. Post-translationally, the disulfide bond which can form in the large chain dimeric partners within the hexadecamer appears to be associated with oxidative stress and protein turnover.

The protein localises to the plastid. It is found in the chloroplast. The enzyme catalyses 2 (2R)-3-phosphoglycerate + 2 H(+) = D-ribulose 1,5-bisphosphate + CO2 + H2O. It carries out the reaction D-ribulose 1,5-bisphosphate + O2 = 2-phosphoglycolate + (2R)-3-phosphoglycerate + 2 H(+). Its function is as follows. RuBisCO catalyzes two reactions: the carboxylation of D-ribulose 1,5-bisphosphate, the primary event in carbon dioxide fixation, as well as the oxidative fragmentation of the pentose substrate in the photorespiration process. Both reactions occur simultaneously and in competition at the same active site. This chain is Ribulose bisphosphate carboxylase large chain, found in Securidaca diversifolia (Easter flower).